We begin with the raw amino-acid sequence, 573 residues long: Glutathione/L-cysteine transport system ATP-binding/permease protein CydC (573 aa).

At 1-15 the chain is on the cytoplasmic side; it reads MRALLPYLALYKRHK. 2 helical membrane passes run 16 to 36 and 37 to 57; these read WMLSLGIVLAIVTLLASIGLL and TLSGWFLSASAVAGVAGLYSF. Positions 20–306 constitute an ABC transmembrane type-1 domain; that stretch reads LGIVLAIVTL…VTGAFQHLGQ (287 aa). Residues 58 to 136 are Cytoplasmic-facing; it reads NYMLPAAGVR…VDTLDHLYLR (79 aa). Residues 137–157 form a helical membrane-spanning segment; sequence VISPLVGAFVVIMVVTIGLSF. The Periplasmic segment spans residues 158–161; that stretch reads LDFT. The chain crosses the membrane as a helical span at residues 162–182; it reads LAFTLGGIMLLTLFLMPPLFY. Topologically, residues 183–249 are cytoplasmic; the sequence is RAGKSTGQNL…QSELTALSQA (67 aa). A helical membrane pass occupies residues 250-270; sequence IMLLIGALAVILMLWMASGGV. At 271-276 the chain is on the periplasmic side; that stretch reads GGNAQP. A helical membrane pass occupies residues 277-297; the sequence is GALIALFVFCALAAFEALAPV. The Cytoplasmic portion of the chain corresponds to 298 to 573; the sequence is TGAFQHLGQV…GRYYQFKQGL (276 aa). An ABC transporter domain is found at 339-572; it reads LTLRDVQFTY…QGRYYQFKQG (234 aa). 373-380 lines the ATP pocket; the sequence is GRTGCGKS.

It belongs to the ABC transporter superfamily. Cysteine exporter (TC 3.A.1.129.1) family. Forms a heterodimer with CydD.

It localises to the cell inner membrane. The catalysed reaction is L-cysteine(in) + ATP + H2O = L-cysteine(out) + ADP + phosphate + H(+). The enzyme catalyses glutathione(in) + ATP + H2O = glutathione(out) + ADP + phosphate + H(+). Its activity is regulated as follows. ATPase activity is stimulated by various thiol compounds. The presence of heme leads to a further enhancement of thiol-stimulated ATPase activity, although a large excess of heme inhibits activity. Glutathione transport is inhibited by sodium orthovanadate, an inhibitor of ABC-type transport systems, but not by the proton ionophore carbonyl cyanide m-chlorophenylhydrazone (CCCP). Functionally, part of the ABC transporter complex CydDC that exports the reduced low-molecular-weight thiols cysteine and glutathione to the periplasm. Export of these thiol-containing redox-active molecules may be crucial for redox homeostasis in the periplasm, permitting correct assembly of various respiratory complexes and formation of correct disulfide bonds in periplasmic and secreted proteins. CydC contains transmembrane domains (TMD), which form a pore in the inner membrane, and an ATP-binding domain (NBD), which is responsible for energy generation. Required for the assembly of functional cytochrome bd-type quinol oxidases and periplasmic c-type cytochromes. Overexpression of CydDC under anaerobic conditions also results in the formation of a heme biosynthesis-derived pigment, P-574. CydDC binds heme b, but heme is probably not transported by the complex and instead has a role in regulating ATPase activity. Its function is as follows. Conversely, a more recent study suggests an alternative function of CydDC: authors suggest that CydDC does not mediate the export of L-cysteine but rather reduces cytoplasmic L-cystine to L-cysteine. The principle function of CydDC would be to maintain the reduced state of cytoplasmic L-cysteine, thereby providing an important connection between sulfur metabolism, oxidative stress and resistance to antibiotics. This is Glutathione/L-cysteine transport system ATP-binding/permease protein CydC from Escherichia coli (strain K12).